The following is a 691-amino-acid chain: Two-component response regulator ORR21 (691 aa).

In terms of domain architecture, Response regulatory spans 17-132 (KVLVVDDDPT…ELKNIWQHVI (116 aa)). Position 68 is a 4-aspartylphosphate (D68). Positions 139-155 (NKEHEHSGSLDDTDRTR) are enriched in basic and acidic residues. Disordered stretches follow at residues 139 to 204 (NKEH…KKPR) and 616 to 647 (SHPG…HGFV). Residues 199–258 (TSKKPRVVWSVELHQQFVNAVNHLGIDKAVPKKILELMNVPGLTRENVASHLQKFRLYLK) constitute a DNA-binding region (myb-like GARP). A compositionally biased stretch (low complexity) spans 616 to 628 (SHPGSSSSSFQSS).

It belongs to the ARR family. Type-B subfamily. Two-component system major event consists of a His-to-Asp phosphorelay between a sensor histidine kinase (HK) and a response regulator (RR). In plants, the His-to-Asp phosphorelay involves an additional intermediate named Histidine-containing phosphotransfer protein (HPt). This multistep phosphorelay consists of a His-Asp-His-Asp sequential transfer of a phosphate group between first a His and an Asp of the HK protein, followed by the transfer to a conserved His of the HPt protein and finally the transfer to an Asp in the receiver domain of the RR protein.

The protein localises to the nucleus. Functionally, transcriptional activator that binds specific DNA sequence. Functions as a response regulator involved in His-to-Asp phosphorelay signal transduction system. Phosphorylation of the Asp residue in the receiver domain activates the ability of the protein to promote the transcription of target genes. May directly activate some type-A response regulators in response to cytokinins. This is Two-component response regulator ORR21 from Oryza sativa subsp. indica (Rice).